The following is a 565-amino-acid chain: Sulfite reductase [NADPH] hemoprotein beta-component (565 aa).

Cys429, Cys435, Cys474, and Cys478 together coordinate [4Fe-4S] cluster. Residue Cys478 coordinates siroheme.

The protein belongs to the nitrite and sulfite reductase 4Fe-4S domain family. As to quaternary structure, alpha(8)-beta(8). The alpha component is a flavoprotein, the beta component is a hemoprotein. Siroheme is required as a cofactor. The cofactor is [4Fe-4S] cluster.

It catalyses the reaction hydrogen sulfide + 3 NADP(+) + 3 H2O = sulfite + 3 NADPH + 4 H(+). The protein operates within sulfur metabolism; hydrogen sulfide biosynthesis; hydrogen sulfide from sulfite (NADPH route): step 1/1. Its function is as follows. Component of the sulfite reductase complex that catalyzes the 6-electron reduction of sulfite to sulfide. This is one of several activities required for the biosynthesis of L-cysteine from sulfate. This chain is Sulfite reductase [NADPH] hemoprotein beta-component, found in Pseudoalteromonas translucida (strain TAC 125).